The primary structure comprises 429 residues: Trehalose-phosphate phosphatase (429 aa).

Asp-181 (nucleophile) is an active-site residue. Asp-181, Asp-183, and Asp-368 together coordinate Mg(2+). 181-183 serves as a coordination point for substrate; it reads DFD.

Belongs to the trehalose phosphatase family. It depends on Mg(2+) as a cofactor.

It catalyses the reaction alpha,alpha-trehalose 6-phosphate + H2O = alpha,alpha-trehalose + phosphate. It participates in glycan biosynthesis; trehalose biosynthesis. Removes the phosphate from trehalose 6-phosphate to produce free trehalose. This Mycobacterium leprae (strain TN) protein is Trehalose-phosphate phosphatase (otsB).